Reading from the N-terminus, the 345-residue chain is Glycerol-3-phosphate dehydrogenase [NAD(P)+] (345 aa).

Ser11, Trp12, His32, Arg33, and Lys106 together coordinate NADPH. Sn-glycerol 3-phosphate contacts are provided by Lys106, Gly137, and Ser139. Ala141 serves as a coordination point for NADPH. Sn-glycerol 3-phosphate is bound by residues Lys192, Asp245, Ser255, Arg256, and Asn257. Lys192 acts as the Proton acceptor in catalysis. Residue Arg256 participates in NADPH binding. 2 residues coordinate NADPH: Val280 and Glu282.

This sequence belongs to the NAD-dependent glycerol-3-phosphate dehydrogenase family.

It is found in the cytoplasm. It carries out the reaction sn-glycerol 3-phosphate + NAD(+) = dihydroxyacetone phosphate + NADH + H(+). The enzyme catalyses sn-glycerol 3-phosphate + NADP(+) = dihydroxyacetone phosphate + NADPH + H(+). The protein operates within membrane lipid metabolism; glycerophospholipid metabolism. Does not seem to be inhibited by sn-glycerol 3-phosphate, in contrast to the E.coli homolog enzyme which is very sensitive to allosteric inhibition by G3P. Its function is as follows. Catalyzes the reduction of the glycolytic intermediate dihydroxyacetone phosphate (DHAP) to sn-glycerol 3-phosphate (G3P), the key precursor for phospholipid synthesis. This is Glycerol-3-phosphate dehydrogenase [NAD(P)+] from Bacillus subtilis (strain 168).